Consider the following 192-residue polypeptide: Large ribosomal subunit protein uL5 (192 aa).

This sequence belongs to the universal ribosomal protein uL5 family. As to quaternary structure, part of the 50S ribosomal subunit; part of the 5S rRNA/L5/L18/L25 subcomplex. Contacts the 5S rRNA and the P site tRNA. Forms a bridge to the 30S subunit in the 70S ribosome.

Functionally, this is one of the proteins that bind and probably mediate the attachment of the 5S RNA into the large ribosomal subunit, where it forms part of the central protuberance. In the 70S ribosome it contacts protein S13 of the 30S subunit (bridge B1b), connecting the 2 subunits; this bridge is implicated in subunit movement. Contacts the P site tRNA; the 5S rRNA and some of its associated proteins might help stabilize positioning of ribosome-bound tRNAs. This chain is Large ribosomal subunit protein uL5, found in Zymomonas mobilis subsp. mobilis (strain ATCC 31821 / ZM4 / CP4).